Reading from the N-terminus, the 291-residue chain is Probable 2-(5''-triphosphoribosyl)-3'-dephosphocoenzyme-A synthase (291 aa).

The protein belongs to the CitG/MdcB family.

It catalyses the reaction 3'-dephospho-CoA + ATP = 2'-(5''-triphospho-alpha-D-ribosyl)-3'-dephospho-CoA + adenine. Involved in the formation of 2-(5''-phosphoribosyl)-3'-dephosphocoenzyme-A, the prosthetic group of the acyl-carrier protein of the malonate decarboxylase. The polypeptide is Probable 2-(5''-triphosphoribosyl)-3'-dephosphocoenzyme-A synthase (Pseudomonas syringae pv. tomato (strain ATCC BAA-871 / DC3000)).